We begin with the raw amino-acid sequence, 331 residues long: (E)-beta farnesene synthase MBR_03882 (331 aa).

It belongs to the trichodiene synthase family.

It catalyses the reaction (2E,6E)-farnesyl diphosphate = (E)-beta-farnesene + diphosphate. Functionally, terpene synthase that catalyzes the conversion of (2E,6E)-farnesyl diphosphate (FPP) into the volatile sesquiterpene (E)-beta-farnesene. This chain is (E)-beta farnesene synthase MBR_03882, found in Metarhizium brunneum (strain ARSEF 3297).